Here is a 288-residue protein sequence, read N- to C-terminus: Beta-lactamase PSE-4 (288 aa).

Residues 1–17 (MKFLLAFSLLIPSVVFA) form the signal peptide. Catalysis depends on Ser-65, which acts as the Acyl-ester intermediate. The cysteines at positions 72 and 118 are disulfide-linked. Position 229-231 (229-231 (RSG)) interacts with substrate.

It belongs to the class-A beta-lactamase family.

The catalysed reaction is a beta-lactam + H2O = a substituted beta-amino acid. In terms of biological role, hydrolyzes both carbenicillin and oxacillin. This Pseudomonas aeruginosa protein is Beta-lactamase PSE-4 (pse4).